Reading from the N-terminus, the 431-residue chain is Glutamate-1-semialdehyde 2,1-aminomutase (431 aa).

Lys-265 carries the post-translational modification N6-(pyridoxal phosphate)lysine.

This sequence belongs to the class-III pyridoxal-phosphate-dependent aminotransferase family. HemL subfamily. Homodimer. The cofactor is pyridoxal 5'-phosphate.

The protein resides in the cytoplasm. The enzyme catalyses (S)-4-amino-5-oxopentanoate = 5-aminolevulinate. It functions in the pathway porphyrin-containing compound metabolism; protoporphyrin-IX biosynthesis; 5-aminolevulinate from L-glutamyl-tRNA(Glu): step 2/2. This Vibrio vulnificus (strain YJ016) protein is Glutamate-1-semialdehyde 2,1-aminomutase.